The sequence spans 196 residues: Protein Flattop (196 aa).

A disordered region spans residues 107–196 (NGLRPEIFGK…PHAGRNLAEV (90 aa)). Basic and acidic residues predominate over residues 113-124 (IFGKPHDPDSQK). Over residues 137–149 (APSPTIIPSSPAS) the composition is skewed to low complexity. Residues 150 to 162 (NLSSPDQLQSSHP) are compositionally biased toward polar residues.

It belongs to the Flattop family. As to quaternary structure, microtubule inner protein component of sperm flagellar doublet microtubules. Interacts with DLG3. As to expression, expressed in trachea multiciliated cells.

It is found in the cytoplasm. The protein localises to the cytoskeleton. It localises to the cilium basal body. Its subcellular location is the cell projection. The protein resides in the cilium. It is found in the apical cell membrane. The protein localises to the cilium axoneme. It localises to the flagellum axoneme. Its function is as follows. Microtubule inner protein (MIP) part of the dynein-decorated doublet microtubules (DMTs) in cilia axoneme. Acts as a regulator of cilium basal body docking and positioning in mono- and multiciliated cells. Regulates basal body docking and cilia formation in multiciliated lung cells. Regulates kinocilium positioning and stereocilia bundle morphogenesis in the inner ear. The chain is Protein Flattop from Bos taurus (Bovine).